The primary structure comprises 390 residues: MDLESFLLGAVYYYGLFIGLSNFEFDWNTGRVFTKKWSTLYAIALDSCIFALYIYHWTGNTNIVNAIFGRANMLHEYVVAILTGLRIVTGLFTLILRWYQRCKMMDLASKVVRMYVARPQVRRMSRWGILTKFIFGSITDGLQMAMVLSAMGSVDSQFYLGLGLQYWMFVILNMAMMQQHMIMLFVRTQFQLINTELRQVIDEAKDLLLSPRHQGVFMTKCCSLADQIENIARIQSQLQTIMNQMEEVFGIQGAMTYGGYYLSSVGTCYLAYSILKHGYENLSMTLSTVILAYSWCFFYYLDGMLNLSVMLHVQDDYWEMLQILGKRTIFVGLDVRLEEAFENLNLQLIRNPLKITVVKLYDVTRSNTMAMFGNLITHSIFLIQYDIEHF.

At 1 to 4 (MDLE) the chain is on the cytoplasmic side. A helical membrane pass occupies residues 5–25 (SFLLGAVYYYGLFIGLSNFEF). Over 26–36 (DWNTGRVFTKK) the chain is Extracellular. A helical transmembrane segment spans residues 37 to 57 (WSTLYAIALDSCIFALYIYHW). Topologically, residues 58–75 (TGNTNIVNAIFGRANMLH) are cytoplasmic. Residues 76 to 96 (EYVVAILTGLRIVTGLFTLIL) traverse the membrane as a helical segment. The Extracellular portion of the chain corresponds to 97–132 (RWYQRCKMMDLASKVVRMYVARPQVRRMSRWGILTK). A helical transmembrane segment spans residues 133-153 (FIFGSITDGLQMAMVLSAMGS). The Cytoplasmic segment spans residues 154-165 (VDSQFYLGLGLQ). A helical transmembrane segment spans residues 166–186 (YWMFVILNMAMMQQHMIMLFV). Residues 187–254 (RTQFQLINTE…MEEVFGIQGA (68 aa)) are Extracellular-facing. A helical membrane pass occupies residues 255–275 (MTYGGYYLSSVGTCYLAYSIL). Topologically, residues 276-288 (KHGYENLSMTLST) are cytoplasmic. A helical membrane pass occupies residues 289-309 (VILAYSWCFFYYLDGMLNLSV). The Extracellular segment spans residues 310 to 390 (MLHVQDDYWE…FLIQYDIEHF (81 aa)).

It belongs to the insect chemoreceptor superfamily. Gustatory receptor (GR) family. Gr22e subfamily. Expressed in neurons of the terminal external chemosensory organ of larvae.

It localises to the cell membrane. In terms of biological role, probable gustatory receptor which mediates acceptance or avoidance behavior, depending on its substrates. The polypeptide is Putative gustatory receptor 36c (Gr36c) (Drosophila melanogaster (Fruit fly)).